The chain runs to 284 residues: Ubiquinone biosynthesis protein COQ4, mitochondrial (284 aa).

Residues H165, D166, H169, and E181 each coordinate Zn(2+).

The protein belongs to the COQ4 family. Component of a multi-subunit COQ enzyme complex, composed of at least COQ3, COQ4, COQ5, COQ6, COQ7 and COQ9. It depends on Zn(2+) as a cofactor.

The protein resides in the mitochondrion inner membrane. The enzyme catalyses a 4-hydroxy-3-methoxy-5-(all-trans-polyprenyl)benzoate + H(+) = a 2-methoxy-6-(all-trans-polyprenyl)phenol + CO2. It functions in the pathway cofactor biosynthesis; ubiquinone biosynthesis. Functionally, lyase that catalyzes the C1-decarboxylation of 4-hydroxy-3-methoxy-5-(all-trans-polyprenyl)benzoic acid into 2-methoxy-6-(all-trans-polyprenyl)phenol during ubiquinone biosynthesis. The protein is Ubiquinone biosynthesis protein COQ4, mitochondrial of Blastomyces gilchristii (strain SLH14081) (Blastomyces dermatitidis).